An 825-amino-acid chain; its full sequence is MRNKLRRLLAIMMAVLLITSLFAPMVSAEEGDNGDDDDLVTPIEIEERPHESNYEKYPALLDGGLDERRPSEAGALQLVEVDGQVTLADQDGVPIQLRGMSTHGLQWFGEIVNENAFAALANDWGSNVIRLALYIGENAYRYNPDLIEKVYAGIELAKENDMYVIIDWHVHAPGDPNADIYQGGVNEDGEEYLGAKDFFLHIAEKYPNDPHLIYELANEPSSNSSGGPGITNDEDGWEAVREYAQPIVDALRDSGNAEDNIIIVGSPNWSQRMDLAAADNPIDDHHTMYTLHFYTGTHEGTNESYPEGISSEDRSNVMANAKYALDKGKAIFATEWGVSEADGNNGPYLNEADVWLNFLNENNISWTNWSLTNKNETSGAFTPFILNESDATDLDPGEDQVWSMEELSVSGEYVRSRILGEEYQPIDRTPREEFSEVIWDFNDGTTQGFVQNSDSPLDVTIENVNDALQITGLDESNAIAGEEEDYWSNVRISADEWEETFDILGAEELSMDVVVDDPTTVAIAAIPQSSAHEWANASNSVLITEDDFEEQEDGTYKALLTITGEDAPNLTNIAEDPEGSELNNIILFVGTENADVISLDNITVTGDRESVPEPVEHDTKGDSALPSDFEDGTRQGWEWDSESAVRTALTIEEANGSNALSWEYAYPEVKPSDDWATAPRLTLYKDDLVRGDYEFVAFDFYIDPIEDRATEGAIDINLIFQPPAAGYWAQASETFEIDLEELDSATVTDDGLYHYEVEINIEDIENDIELRNLMLIFADDESDFAGRVFLDNVRMDMSLETKVEVLERNINELQEQLVEVEALMR.

Positions 1-28 are cleaved as a signal peptide; it reads MRNKLRRLLAIMMAVLLITSLFAPMVSA. Glu219 (proton donor) is an active-site residue. Glu335 (nucleophile) is an active-site residue. Basic and acidic residues predominate over residues 607-621; sequence DRESVPEPVEHDTKG. The tract at residues 607–635 is disordered; that stretch reads DRESVPEPVEHDTKGDSALPSDFEDGTRQ.

The protein belongs to the glycosyl hydrolase 5 (cellulase A) family.

The enzyme catalyses Endohydrolysis of (1-&gt;4)-beta-D-glucosidic linkages in cellulose, lichenin and cereal beta-D-glucans.. This is Endoglucanase C (celC) from Evansella cellulosilytica (strain ATCC 21833 / DSM 2522 / FERM P-1141 / JCM 9156 / N-4) (Bacillus cellulosilyticus).